The following is a 372-amino-acid chain: Histidinol-phosphate aminotransferase (372 aa).

Residue lysine 230 is modified to N6-(pyridoxal phosphate)lysine.

Belongs to the class-II pyridoxal-phosphate-dependent aminotransferase family. Histidinol-phosphate aminotransferase subfamily. In terms of assembly, homodimer. Pyridoxal 5'-phosphate serves as cofactor.

The enzyme catalyses L-histidinol phosphate + 2-oxoglutarate = 3-(imidazol-4-yl)-2-oxopropyl phosphate + L-glutamate. Its pathway is amino-acid biosynthesis; L-histidine biosynthesis; L-histidine from 5-phospho-alpha-D-ribose 1-diphosphate: step 7/9. This is Histidinol-phosphate aminotransferase from Paenarthrobacter aurescens (strain TC1).